Here is a 255-residue protein sequence, read N- to C-terminus: ATP synthase subunit a (255 aa).

6 helical membrane passes run valine 28 to glycine 48, isoleucine 86 to valine 106, isoleucine 125 to isoleucine 145, phenylalanine 164 to isoleucine 184, leucine 203 to tryptophan 223, and alanine 224 to valine 244.

This sequence belongs to the ATPase A chain family. In terms of assembly, F-type ATPases have 2 components, CF(1) - the catalytic core - and CF(0) - the membrane proton channel. CF(1) has five subunits: alpha(3), beta(3), gamma(1), delta(1), epsilon(1). CF(0) has three main subunits: a(1), b(2) and c(9-12). The alpha and beta chains form an alternating ring which encloses part of the gamma chain. CF(1) is attached to CF(0) by a central stalk formed by the gamma and epsilon chains, while a peripheral stalk is formed by the delta and b chains.

It is found in the cell inner membrane. Functionally, key component of the proton channel; it plays a direct role in the translocation of protons across the membrane. In Alkalilimnicola ehrlichii (strain ATCC BAA-1101 / DSM 17681 / MLHE-1), this protein is ATP synthase subunit a.